The sequence spans 282 residues: Probable transcription factor At1g66420 (282 aa).

The tract at residues 33–73 (SKKNEEFCGGSGKVQPSEMKRRSEGTSTDMTSKRAKKVSAE) is disordered.

The protein belongs to the GeBP family.

The protein is Probable transcription factor At1g66420 of Arabidopsis thaliana (Mouse-ear cress).